We begin with the raw amino-acid sequence, 335 residues long: Sphingomyelinase C (335 aa).

The signal sequence occupies residues 1–28 (MEKFKIIKTIPKICGAFIFLLFFTFLFG).

It belongs to the neutral sphingomyelinase family.

The protein localises to the secreted. It catalyses the reaction a sphingomyelin + H2O = phosphocholine + an N-acylsphing-4-enine + H(+). Virulence factor that promotes intracellular proliferation by mediating the disruption of the phagocytic vacuole and the release of bacteria into the host cell cytosol. May act in concert with the phospholipases PlcA and PlcB and the hemolysin hly to mediate efficient escape from the vacuole. This is Sphingomyelinase C (smcL) from Listeria ivanovii.